The following is a 245-amino-acid chain: MATQLHRSLKTPAAVAVRGLSRAFGPRRVIDNLDLAIRPGEFVALLGASGCGKSTLLRILGDLDPEFEGEVVVPSRRAIAFQAPRLMPWKRVWHNVVLGLPGRPDRKRAERALDEVGIGHRADVWPKVLSGGEAQRAALARALVREPDLLLLDEPFAALDALTRIKAQALVAELWQRHGCAILLVTHDVEEAILLADRVLVMKEGVIAHHEPIALDRPRDVADPEFARIRGALLDWLGVAHGAAH.

The region spanning Val-15–Ile-229 is the ABC transporter domain. Residue Gly-47–Ser-54 coordinates ATP.

This sequence belongs to the ABC transporter superfamily. Aliphatic sulfonates importer (TC 3.A.1.17.2) family. As to quaternary structure, the complex is composed of two ATP-binding proteins (SsuB), two transmembrane proteins (SsuC) and a solute-binding protein (SsuA).

The protein localises to the cell inner membrane. The catalysed reaction is ATP + H2O + aliphatic sulfonate-[sulfonate-binding protein]Side 1 = ADP + phosphate + aliphatic sulfonateSide 2 + [sulfonate-binding protein]Side 1.. Functionally, part of the ABC transporter complex SsuABC involved in aliphatic sulfonates import. Responsible for energy coupling to the transport system. This Paracoccus denitrificans (strain Pd 1222) protein is Aliphatic sulfonates import ATP-binding protein SsuB 2.